The following is a 358-amino-acid chain: Hydroxyproline O-arabinosyltransferase 2 (358 aa).

The chain crosses the membrane as a helical; Signal-anchor span at residues 7–26 (YFFPILMTLSLFLIIRYNYI).

As to expression, ubiquitous.

It localises to the golgi apparatus. The protein resides in the cis-Golgi network membrane. The enzyme catalyses trans-4-hydroxy-L-prolyl-[protein] + UDP-beta-L-arabinofuranose = O-(beta-L-arabinofuranosyl)-trans-4-hydroxy-L-prolyl-[protein] + UDP + H(+). Its function is as follows. Glycosyltransferase involved in the O-arabinosylation of several proteins including extensins and small signaling peptides. Catalyzes the transfer of the initial L-arabinose to the hydroxyl group of Hyp residues. Contributes redundantly with HPAT1 and HPAT3 to arabinosylation of EXT3. The polypeptide is Hydroxyproline O-arabinosyltransferase 2 (Arabidopsis thaliana (Mouse-ear cress)).